A 201-amino-acid polypeptide reads, in one-letter code: Recombination protein RecR (201 aa).

The C4-type zinc finger occupies 57–72 (CADCRTFTEQEVCNIC). In terms of domain architecture, Toprim spans 81 to 176 (GQICVVESPA…EASRIAHGVP (96 aa)).

It belongs to the RecR family.

Its function is as follows. May play a role in DNA repair. It seems to be involved in an RecBC-independent recombinational process of DNA repair. It may act with RecF and RecO. In Shigella boydii serotype 18 (strain CDC 3083-94 / BS512), this protein is Recombination protein RecR.